Here is a 258-residue protein sequence, read N- to C-terminus: Cytosolic Fe-S cluster assembly factor Nubp2 homolog (258 aa).

14 to 21 (GKGGVGKS) lines the ATP pocket. Positions 188 and 191 each coordinate [4Fe-4S] cluster.

Belongs to the Mrp/NBP35 ATP-binding proteins family. NUBP2/CFD1 subfamily. In terms of assembly, heterotetramer of 2 Nubp1 and 2 Nubp2 chains. The cofactor is [4Fe-4S] cluster.

The protein resides in the cytoplasm. Component of the cytosolic iron-sulfur (Fe/S) protein assembly (CIA) machinery. Required for maturation of extramitochondrial Fe-S proteins. The Nubp1-Nubp2 heterotetramer forms a Fe-S scaffold complex, mediating the de novo assembly of an Fe-S cluster and its transfer to target apoproteins. This Drosophila pseudoobscura pseudoobscura (Fruit fly) protein is Cytosolic Fe-S cluster assembly factor Nubp2 homolog.